Here is a 599-residue protein sequence, read N- to C-terminus: Retrotransposon Gag-like protein 5 (599 aa).

3 disordered regions span residues 77-97 (DPTP…CWPP), 116-139 (DYTN…ELHS), and 377-450 (FPQE…EEDE). A compositionally biased stretch (acidic residues) spans 78–90 (PTPEEEEEEEEEV). Composition is skewed to acidic residues over residues 393-432 (DEME…EDKE) and 439-450 (DSDENKYEEEDE).

The protein is Retrotransposon Gag-like protein 5 of Mus musculus (Mouse).